A 353-amino-acid polypeptide reads, in one-letter code: Photosystem II protein D1 (353 aa).

The residue at position 2 (T2) is an N-acetylthreonine. Residue T2 is modified to Phosphothreonine. 3 helical membrane-spanning segments follow: residues 29–46 (YIGWFGVLMIPTLLTATS), 118–133 (HFLLGVACYMGREWEL), and 142–156 (WIAVAYSAPVAAATA). H118 serves as a coordination point for chlorophyll a. Y126 lines the pheophytin a pocket. D170 and E189 together coordinate [CaMn4O5] cluster. The helical transmembrane segment at 197–218 (FHMLGVAGVFGSSLFSAMHGSL) threads the bilayer. H198 serves as a coordination point for chlorophyll a. A quinone-binding positions include H215 and 264 to 265 (SF). H215 lines the Fe cation pocket. Residue H272 coordinates Fe cation. A helical membrane pass occupies residues 274–288 (FLAAWPVVGIWFTAL). Residues H332, E333, D342, and A344 each contribute to the [CaMn4O5] cluster site. Positions 345–353 (AMEAPSVNG) are excised as a propeptide.

It belongs to the reaction center PufL/M/PsbA/D family. As to quaternary structure, PSII is composed of 1 copy each of membrane proteins PsbA, PsbB, PsbC, PsbD, PsbE, PsbF, PsbH, PsbI, PsbJ, PsbK, PsbL, PsbM, PsbT, PsbX, PsbY, PsbZ, Psb30/Ycf12, at least 3 peripheral proteins of the oxygen-evolving complex and a large number of cofactors. It forms dimeric complexes. It depends on The D1/D2 heterodimer binds P680, chlorophylls that are the primary electron donor of PSII, and subsequent electron acceptors. It shares a non-heme iron and each subunit binds pheophytin, quinone, additional chlorophylls, carotenoids and lipids. D1 provides most of the ligands for the Mn4-Ca-O5 cluster of the oxygen-evolving complex (OEC). There is also a Cl(-1) ion associated with D1 and D2, which is required for oxygen evolution. The PSII complex binds additional chlorophylls, carotenoids and specific lipids. as a cofactor. Post-translationally, tyr-161 forms a radical intermediate that is referred to as redox-active TyrZ, YZ or Y-Z. C-terminally processed by CTPA; processing is essential to allow assembly of the oxygen-evolving complex and thus photosynthetic growth.

It localises to the plastid. The protein resides in the chloroplast thylakoid membrane. The enzyme catalyses 2 a plastoquinone + 4 hnu + 2 H2O = 2 a plastoquinol + O2. Functionally, photosystem II (PSII) is a light-driven water:plastoquinone oxidoreductase that uses light energy to abstract electrons from H(2)O, generating O(2) and a proton gradient subsequently used for ATP formation. It consists of a core antenna complex that captures photons, and an electron transfer chain that converts photonic excitation into a charge separation. The D1/D2 (PsbA/PsbD) reaction center heterodimer binds P680, the primary electron donor of PSII as well as several subsequent electron acceptors. The sequence is that of Photosystem II protein D1 from Vigna unguiculata (Cowpea).